A 443-amino-acid polypeptide reads, in one-letter code: Ribosomal protein uS12 methylthiotransferase RimO (443 aa).

The region spanning 8 to 118 (PKVGFVSLGC…VVNAVHEVVP (111 aa)) is the MTTase N-terminal domain. Residues cysteine 17, cysteine 53, cysteine 82, cysteine 151, cysteine 155, and cysteine 158 each contribute to the [4Fe-4S] cluster site. A Radical SAM core domain is found at 137 to 375 (LTPRHYAYLK…MAHQQAISTA (239 aa)). Residues 378 to 443 (QLRIGKEIEV…DEYDMWAEPI (66 aa)) enclose the TRAM domain.

Belongs to the methylthiotransferase family. RimO subfamily. [4Fe-4S] cluster is required as a cofactor.

The protein localises to the cytoplasm. The catalysed reaction is L-aspartate(89)-[ribosomal protein uS12]-hydrogen + (sulfur carrier)-SH + AH2 + 2 S-adenosyl-L-methionine = 3-methylsulfanyl-L-aspartate(89)-[ribosomal protein uS12]-hydrogen + (sulfur carrier)-H + 5'-deoxyadenosine + L-methionine + A + S-adenosyl-L-homocysteine + 2 H(+). In terms of biological role, catalyzes the methylthiolation of an aspartic acid residue of ribosomal protein uS12. The sequence is that of Ribosomal protein uS12 methylthiotransferase RimO from Pseudomonas putida (strain GB-1).